Here is a 940-residue protein sequence, read N- to C-terminus: Isoleucine--tRNA ligase (940 aa).

A 'HIGH' region motif is present at residues 58-68 (PYANGSIHIGH). Glu564 is a binding site for L-isoleucyl-5'-AMP. Residues 605–609 (KMSKS) carry the 'KMSKS' region motif. An ATP-binding site is contributed by Lys608. Zn(2+)-binding residues include Cys903, Cys906, Cys923, and Cys926.

The protein belongs to the class-I aminoacyl-tRNA synthetase family. IleS type 1 subfamily. As to quaternary structure, monomer. Zn(2+) serves as cofactor.

The protein resides in the cytoplasm. The catalysed reaction is tRNA(Ile) + L-isoleucine + ATP = L-isoleucyl-tRNA(Ile) + AMP + diphosphate. Functionally, catalyzes the attachment of isoleucine to tRNA(Ile). As IleRS can inadvertently accommodate and process structurally similar amino acids such as valine, to avoid such errors it has two additional distinct tRNA(Ile)-dependent editing activities. One activity is designated as 'pretransfer' editing and involves the hydrolysis of activated Val-AMP. The other activity is designated 'posttransfer' editing and involves deacylation of mischarged Val-tRNA(Ile). This Shewanella amazonensis (strain ATCC BAA-1098 / SB2B) protein is Isoleucine--tRNA ligase.